The primary structure comprises 280 residues: Protoheme IX farnesyltransferase 2 (280 aa).

The next 9 helical transmembrane spans lie at 12–32, 35–55, 76–96, 98–118, 129–149, 158–178, 199–221, 226–248, and 255–275; these read VIWLLILASVAGYIYGGGGVD, LFSLLAVAFLSTGGSAAFNHY, LITPNAALAYSLALSATGISL, FLLLGLLPGLFVLLGWLFYAV, WLNIFGGGFAGNAVFLGGYAL, AVLISFAIYLWTPSHIWALAF, ERAVAVISAINAAAAAYILWLYL, GAGGAIVALGVAATIATSIYAAV, and MWKMYKASSPMLTLFLIALMI.

Belongs to the UbiA prenyltransferase family. Protoheme IX farnesyltransferase subfamily.

It is found in the cell membrane. It catalyses the reaction heme b + (2E,6E)-farnesyl diphosphate + H2O = Fe(II)-heme o + diphosphate. The protein operates within porphyrin-containing compound metabolism; heme O biosynthesis; heme O from protoheme: step 1/1. Its function is as follows. Converts heme B (protoheme IX) to heme O by substitution of the vinyl group on carbon 2 of heme B porphyrin ring with a hydroxyethyl farnesyl side group. This Pyrobaculum aerophilum (strain ATCC 51768 / DSM 7523 / JCM 9630 / CIP 104966 / NBRC 100827 / IM2) protein is Protoheme IX farnesyltransferase 2.